The sequence spans 522 residues: Poly(A) polymerase (522 aa).

ATP-binding positions include 63–65 (YGS), 76–78 (DID), Asp-130, Lys-193, Tyr-202, and 211–212 (GI). Mg(2+)-binding residues include Asp-76, Asp-78, and Asp-130. Positions 475-522 (QLKAKEENSIPNEEKKEQLKKEMKQEANTIVKNSSTDDDFMKRFTRKN) are disordered. The segment covering 476 to 499 (LKAKEENSIPNEEKKEQLKKEMKQ) has biased composition (basic and acidic residues).

This sequence belongs to the poly(A) polymerase family. It depends on Mg(2+) as a cofactor. Mn(2+) is required as a cofactor.

Its subcellular location is the cytoplasm. It localises to the nucleus. It carries out the reaction RNA(n) + ATP = RNA(n)-3'-adenine ribonucleotide + diphosphate. Polymerase that creates the 3'-poly(A) tail of mRNA's. May acquire specificity through interaction with a cleavage and polyadenylation factor. The chain is Poly(A) polymerase from Entamoeba histolytica (strain ATCC 30459 / HM-1:IMSS / ABRM).